Here is a 1043-residue protein sequence, read N- to C-terminus: MPLLEGSVGVEDLVLLEPLVEESLLKNLQLRYENKEIYTYIGNVVISVNPYQQLPIYGPEFIAKYQDYTFYELKPHIYALANVAYQSLRDRDRDQCILITGESGSGKTEASKLVMSYVAAVCGKGEQVNSVKEQLLQSNPVLEAFGNAKTIRNNNSSRFGKYMDIEFDFKGSPLGGVITNYLLEKSRLVKQLKGERNFHIFYQLLAGADEQLLKALKLERDTTGYAYLNHEVSRVDGMDDASSFRAVQSAMAVIGFSEEEIRQVLEVTSMVLKLGNVLVADEFQASGIPASGIRDGRGVREIGEMVGLNSEEVERALCSRTMETAKEKVVTALNVMQAQYARDALAKNIYSRLFDWIVNRINESIKVGIGEKKKVMGVLDIYGFEILEDNSFEQFVINYCNEKLQQVFIEMTLKEEQEEYKREGIPWTKVDYFDNGIICKLIEHNQRGILAMLDEECLRPGVVSDSTFLAKLNQLFSKHGHYESKVTQNAQRQYDHTMGLSCFRICHYAGKVTYNVTSFIDKNNDLLFRDLLQAMWKAQHPLLRSLFPEGNPKQASLKRPPTAGAQFKSSVAILMKNLYSKSPNYIRCIKPNEHQQRGQFSSDLVATQARYLGLLENVRVRRAGYAHRQGYGPFLERYRLLSRSTWPHWNGGDREGVEKVLGELSMSSGELAFGKTKIFIRSPKTLFYLEEQRRLRLQQLATLIQKIYRGWRCRTHYQLMRKSQILISSWFRGNMQKKCYGKIKASVLLIQAFVRGWKARKNYRKYFRSEAALTLADFIYKSMVQKFLLGLKNNLPSTNVLDKTWPAAPYKCLSTANQELQQLFYQWKCKRFRDQLSPKQVEILREKLCASELFKGKKASYPQSVPIPFCGDYIGLQGNPKLQKLKGGEEGPVLMAEAVKKVNRGNGKTSSRILLLTKGHVILTDTKKSQAKIVIGLDNVAGVSVTSLKDGLFSLHLSEMSSVGSKGDFLLVSEHVIELLTKMYRAVLDATQRQLTVTVTEKFSVRFKENSVAVKVVQGPAGGDNSKLRYKKKGSHCLEVTVQ.

Residues 8–694 (VGVEDLVLLE…TLFYLEEQRR (687 aa)) form the Myosin motor domain. 101 to 108 (GESGSGKT) contributes to the ATP binding site. The segment at 571-593 (VAILMKNLYSKSPNYIRCIKPNE) is actin-binding. IQ domains are found at residues 697–719 (LQQL…HYQL), 720–742 (MRKS…CYGK), and 743–772 (IKAS…SEAA). One can recognise a TH1 domain in the interval 858–1042 (KASYPQSVPI…KGSHCLEVTV (185 aa)).

The protein belongs to the TRAFAC class myosin-kinesin ATPase superfamily. Myosin family. In terms of processing, phosphorylated by ALPK1.

Its function is as follows. Involved in directing the movement of organelles along actin filaments. This Homo sapiens (Human) protein is Unconventional myosin-Ia (MYO1A).